Here is a 479-residue protein sequence, read N- to C-terminus: MAQHTVYFPDAFLTQMREAMPSTLSFDDFLAACQRPLRRSIRVNTLKISVADFLQLTAPYGWTLTPIPWCEEGFWIERDNEDALPLGSTAEHLSGLFYIQEASSMLPVAALFADDNAPQRVMDVAAAPGSKTTQIAARMNNEGAILANEFSASRVKVLHANISRCGISNVALTHFDGRVFGAAVPEMFDAILLDAPCSGEGVVRKDPDALKNWSPESNQEIAATQRELIDSAFHALRPGGTLVYSTCTLNQEENEAVCLWLKETYPDAVEFLPLGDLFPGANKALTEEGFLHVFPQIYDCEGFFVARLRKTQAIPALPAPKYKVGNFPFSPVKDREAGQIRQAAAGVGLNWDENLRLWQRDKELWLFPVGIEALIGKVRFSRLGIKLAETHNKGYRWQHEAVIALASPDNMNAFELTPQEAEEWYRGRDVYPQAAPVADDVLVTFQHQPIGLAKRIGSRLKNSYPRELVRDGKLFTGNA.

S-adenosyl-L-methionine contacts are provided by residues Ala-125 to Lys-131, Glu-149, Asp-176, and Asp-194. Cys-247 functions as the Nucleophile in the catalytic mechanism.

The protein belongs to the class I-like SAM-binding methyltransferase superfamily. RsmB/NOP family.

Its subcellular location is the cytoplasm. It catalyses the reaction cytidine(1407) in 16S rRNA + S-adenosyl-L-methionine = 5-methylcytidine(1407) in 16S rRNA + S-adenosyl-L-homocysteine + H(+). Its function is as follows. Specifically methylates the cytosine at position 1407 (m5C1407) of 16S rRNA. The chain is Ribosomal RNA small subunit methyltransferase F from Escherichia coli (strain SE11).